Consider the following 317-residue polypeptide: Methionyl-tRNA formyltransferase (317 aa).

110 to 113 contributes to the (6S)-5,6,7,8-tetrahydrofolate binding site; the sequence is SLLP.

It belongs to the Fmt family.

The enzyme catalyses L-methionyl-tRNA(fMet) + (6R)-10-formyltetrahydrofolate = N-formyl-L-methionyl-tRNA(fMet) + (6S)-5,6,7,8-tetrahydrofolate + H(+). Its function is as follows. Attaches a formyl group to the free amino group of methionyl-tRNA(fMet). The formyl group appears to play a dual role in the initiator identity of N-formylmethionyl-tRNA by promoting its recognition by IF2 and preventing the misappropriation of this tRNA by the elongation apparatus. The sequence is that of Methionyl-tRNA formyltransferase from Bacillus subtilis (strain 168).